The chain runs to 530 residues: Lysine--tRNA ligase (530 aa).

Positions 28-36 match the 'HIGH' region motif; sequence PSGHIHVGN. The 'KMSKS' region motif lies at 278–282; sequence PMSSS.

The protein belongs to the class-I aminoacyl-tRNA synthetase family.

It is found in the cytoplasm. It catalyses the reaction tRNA(Lys) + L-lysine + ATP = L-lysyl-tRNA(Lys) + AMP + diphosphate. This is Lysine--tRNA ligase (lysS) from Methanocaldococcus jannaschii (strain ATCC 43067 / DSM 2661 / JAL-1 / JCM 10045 / NBRC 100440) (Methanococcus jannaschii).